The chain runs to 497 residues: Glutamyl-tRNA(Gln) amidotransferase subunit A (497 aa).

Catalysis depends on charge relay system residues Lys-75 and Ser-150. The active-site Acyl-ester intermediate is the Ser-174.

It belongs to the amidase family. GatA subfamily. In terms of assembly, heterotrimer of A, B and C subunits.

It catalyses the reaction L-glutamyl-tRNA(Gln) + L-glutamine + ATP + H2O = L-glutaminyl-tRNA(Gln) + L-glutamate + ADP + phosphate + H(+). Functionally, allows the formation of correctly charged Gln-tRNA(Gln) through the transamidation of misacylated Glu-tRNA(Gln) in organisms which lack glutaminyl-tRNA synthetase. The reaction takes place in the presence of glutamine and ATP through an activated gamma-phospho-Glu-tRNA(Gln). The chain is Glutamyl-tRNA(Gln) amidotransferase subunit A from Paraburkholderia phymatum (strain DSM 17167 / CIP 108236 / LMG 21445 / STM815) (Burkholderia phymatum).